A 235-amino-acid chain; its full sequence is Uridylate kinase (235 aa).

Residue 10–13 (KLSG) participates in ATP binding. Gly-52 is a UMP binding site. ATP contacts are provided by Gly-53 and Arg-57. Residues Asp-72 and 133–140 (TSNPYFST) each bind UMP. Residues Thr-160, Tyr-166, and Asp-169 each contribute to the ATP site.

This sequence belongs to the UMP kinase family. As to quaternary structure, homohexamer.

It is found in the cytoplasm. The enzyme catalyses UMP + ATP = UDP + ADP. Its pathway is pyrimidine metabolism; CTP biosynthesis via de novo pathway; UDP from UMP (UMPK route): step 1/1. Inhibited by UTP. Its function is as follows. Catalyzes the reversible phosphorylation of UMP to UDP. The polypeptide is Uridylate kinase (Solibacter usitatus (strain Ellin6076)).